Here is a 409-residue protein sequence, read N- to C-terminus: Putative competence-damage inducible protein (409 aa).

This sequence belongs to the CinA family.

The sequence is that of Putative competence-damage inducible protein from Clostridium botulinum (strain ATCC 19397 / Type A).